Reading from the N-terminus, the 152-residue chain is Histone H2B.1 (152 aa).

Basic and acidic residues predominate over residues 1–23 (MAPKAEKKPAEKKPAAGEEKSAE). Residues 1-60 (MAPKAEKKPAEKKPAAGEEKSAEKAPAGKKPKAEKRLPASKASSKEGGAGDKKGRKKAKK) form a disordered region. Residues Lys-7 and Lys-35 each carry the N6-acetyllysine modification. Lys-148 participates in a covalent cross-link: Glycyl lysine isopeptide (Lys-Gly) (interchain with G-Cter in ubiquitin).

This sequence belongs to the histone H2B family. The nucleosome is a histone octamer containing two molecules each of H2A, H2B, H3 and H4 assembled in one H3-H4 heterotetramer and two H2A-H2B heterodimers. The octamer wraps approximately 147 bp of DNA. Post-translationally, can be acetylated to form H2BK6ac and H2BK33ac. In terms of processing, monoubiquitinated by BRE1 to form H2BK143ub1 and deubiquitinated by UBP26. Required for heterochromatic histone H3 di- and trimethylation at H3K4me. May give a specific tag for epigenetic transcriptional activation.

The protein resides in the nucleus. Its subcellular location is the chromosome. Its function is as follows. Core component of nucleosome. Nucleosomes wrap and compact DNA into chromatin, limiting DNA accessibility to the cellular machineries which require DNA as a template. Histones thereby play a central role in transcription regulation, DNA repair, DNA replication and chromosomal stability. DNA accessibility is regulated via a complex set of post-translational modifications of histones, also called histone code, and nucleosome remodeling. This Oryza sativa subsp. indica (Rice) protein is Histone H2B.1.